The sequence spans 593 residues: METDLNDYTVIKEGEAEVLMHKKNQVFFNKAQVNNRDMSIAVLRAFIIKRKQEHEAMLSKRARSSGKVVEKDVSETSKEETPTENGDDNGKTNGEHEVTTQDGPKEAAKTAYESARRELKPPRVLEALSASGLRALRYAREVEGIGQVVALDNDPASVEACQRNIKFNGLMSTSKVESHLTDARVHMLSHPKDFDVVDLDPYGAPSIFLDSAVQSVADGGLLMCTATDMAVLCGANGEVCYSKYGSYPLKGKYCHEMALRILLASIESHANRYKRYIVPVLSVQMDFYVRVFVRVYTSASAMKNTPLKLSYVYQCIGCDSFHLQSVGRSLPKNNSVRYLPGVGPVVPQDCTHCGKKYNMGGPIWSAPIHDQEWVNSILNGVKSMKDRYPAYDRICAVLTTISEELPDVPLFLSLHSLSATLKCTSPSAALFRSAVINAKYRVSGSHVNPLGIKTDAPMEIIWDIMRCWVKNHPIKPQSPEHPGSVILSKEPSHQADFSRHVGSLSKAQAKKVARFLPNPEKHWGPKIRAGRTITSKHVSLLGHEAVNGHLNNNHKEAGDEEEEEEEEEPEEDIIEGEPELKRQKTTEDFASTS.

The 457-residue stretch at 9–465 (TVIKEGEAEV…APMEIIWDIM (457 aa)) folds into the Trm1 methyltransferase domain. Arg-36 contributes to the S-adenosyl-L-methionine binding site. A disordered region spans residues 56–118 (AMLSKRARSS…KTAYESARRE (63 aa)). Basic and acidic residues-rich tracts occupy residues 68 to 81 (VVEK…KEET) and 88 to 118 (DNGK…ARRE). S-adenosyl-L-methionine contacts are provided by Arg-134, Asp-152, and Val-185. Residues Cys-315, Cys-318, Cys-350, and Cys-353 each coordinate Zn(2+). The segment at 546–593 (VNGHLNNNHKEAGDEEEEEEEEEPEEDIIEGEPELKRQKTTEDFASTS) is disordered. The span at 558–577 (GDEEEEEEEEEPEEDIIEGE) shows a compositional bias: acidic residues. Over residues 578 to 587 (PELKRQKTTE) the composition is skewed to basic and acidic residues.

The protein belongs to the class I-like SAM-binding methyltransferase superfamily. Trm1 family.

It catalyses the reaction guanosine(26) in tRNA + 2 S-adenosyl-L-methionine = N(2)-dimethylguanosine(26) in tRNA + 2 S-adenosyl-L-homocysteine + 2 H(+). Dimethylates a single guanine residue at position 26 of most tRNAs using S-adenosyl-L-methionine as donor of the methyl groups. In Arabidopsis thaliana (Mouse-ear cress), this protein is tRNA (guanine(26)-N(2))-dimethyltransferase 1.